Consider the following 537-residue polypeptide: Multidrug resistance protein Stp (537 aa).

14 consecutive transmembrane segments (helical) span residues 6–26 (LLTLIATGLGLFMIFLDALIV), 46–66 (WVVASYSLGMAVFIMSAATLA), 77–97 (IGVSLFTLGSIACGLAPSIAV), 104–124 (AQGLGAAAVSVTSLALVSAAF), 136–156 (IWTAIASIGTTTGPTLGGLLV), 163–183 (SIFYVNLPMGALVLFLTLCYV), 200–220 (LLFIVAVGALVYAVIEGPQIG), 223–243 (SVQTIVMLWTAAVGCALFVWL), 262–282 (YALAIATICTVFFAVYGMLLL), 300–320 (LMILPFSAAVAIVSPLVGHLV), 327–347 (VPILAGLCMLMLGLLMLIFSE), 352–372 (ALVLVGLGLCGSGVALCLTPI), 397–417 (AIGSTIGFAVLGSVLAAWLSA), and 478–498 (VALLVATATLAVVFLAGWRWF).

This sequence belongs to the major facilitator superfamily. EmrB family.

The protein localises to the cell membrane. This Mycobacterium tuberculosis (strain CDC 1551 / Oshkosh) protein is Multidrug resistance protein Stp (stp).